Here is a 243-residue protein sequence, read N- to C-terminus: GTP cyclohydrolase 1 type 2 (243 aa).

Residues His63, His64, Asp102, His209, and Glu213 each contribute to the a divalent metal cation site.

Belongs to the GTP cyclohydrolase I type 2/NIF3 family. Homohexamer.

It catalyses the reaction GTP + H2O = 7,8-dihydroneopterin 3'-triphosphate + formate + H(+). It functions in the pathway cofactor biosynthesis; 7,8-dihydroneopterin triphosphate biosynthesis; 7,8-dihydroneopterin triphosphate from GTP: step 1/1. Functionally, converts GTP to dihydroneopterin triphosphate. The chain is GTP cyclohydrolase 1 type 2 from Helicobacter pylori (strain J99 / ATCC 700824) (Campylobacter pylori J99).